We begin with the raw amino-acid sequence, 227 residues long: Trypsin (227 aa).

In terms of domain architecture, Peptidase S1 spans 1–223 (IVGGEDANVQ…YYDVLMEQIN (223 aa)). C27 and C43 form a disulfide bridge. Residues H42 and D88 each act as charge relay system in the active site. Intrachain disulfides connect C150/C164 and C175/C199. Residue S179 is the Charge relay system of the active site.

It belongs to the peptidase S1 family.

The catalysed reaction is Preferential cleavage: Arg-|-Xaa, Lys-|-Xaa.. This Saccharopolyspora erythraea (Streptomyces erythraeus) protein is Trypsin.